The following is a 550-amino-acid chain: Genetic interactor of prohibitins 3, mitochondrial (550 aa).

A mitochondrion-targeting transit peptide spans 1–43 (MKSRLQAFKQFTRFVSCKSCGVELQSKNPSVTGYYKPPRAVRK). A CP-type G domain is found at 107-298 (IHSFNDIKGA…VNDLPGYTMD (192 aa)).

The protein belongs to the TRAFAC class YlqF/YawG GTPase family. GEP3 subfamily.

It localises to the mitochondrion. Its function is as follows. May be involved in the mitochondrial lipid metabolism. The protein is Genetic interactor of prohibitins 3, mitochondrial (GEP3) of Kluyveromyces lactis (strain ATCC 8585 / CBS 2359 / DSM 70799 / NBRC 1267 / NRRL Y-1140 / WM37) (Yeast).